Consider the following 211-residue polypeptide: UPF0502 protein PC1_1804 (211 aa).

Positions 168–188 (SGDASDAAPEEEGAGDNSHQL) are disordered.

Belongs to the UPF0502 family.

The polypeptide is UPF0502 protein PC1_1804 (Pectobacterium carotovorum subsp. carotovorum (strain PC1)).